The chain runs to 165 residues: MAQVVEVLVEGGKASPGPPLGPAIGPLGLNVKQVVDEINKATKEFEGMQVPVKIIVEDPKKKTFRIEVGIPPTSQLIKKELGIPKGSSEAGHTPAGNLTMEQVIKIAKMKIDQMLAPNLKAAAKEVIGTALSMGVTVEGKDPREVQREIDEGVYDELFAKAEEAQ.

It belongs to the universal ribosomal protein uL11 family. In terms of assembly, part of the ribosomal stalk of the 50S ribosomal subunit. Interacts with L10 and the large rRNA to form the base of the stalk. L10 forms an elongated spine to which L12 dimers bind in a sequential fashion forming a multimeric L10(L12)X complex.

Functionally, forms part of the ribosomal stalk which helps the ribosome interact with GTP-bound translation factors. The protein is Large ribosomal subunit protein uL11 of Thermococcus kodakarensis (strain ATCC BAA-918 / JCM 12380 / KOD1) (Pyrococcus kodakaraensis (strain KOD1)).